Consider the following 343-residue polypeptide: Heme A synthase (343 aa).

The next 8 membrane-spanning stretches (helical) occupy residues 13-33 (VALW…VGGA), 96-116 (HRLL…FFLI), 130-150 (VLLG…SSGL), 165-185 (LGLA…AWAG), 197-217 (GWAL…ALVA), 258-278 (LHHR…GVAA), 290-310 (LTAF…IWTL), and 311-331 (MTAV…ILLA). Heme is bound at residue His260. His322 contacts heme.

Belongs to the COX15/CtaA family. Type 2 subfamily. Interacts with CtaB. The cofactor is heme b.

The protein resides in the cell membrane. It carries out the reaction Fe(II)-heme o + 2 A + H2O = Fe(II)-heme a + 2 AH2. It functions in the pathway porphyrin-containing compound metabolism; heme A biosynthesis; heme A from heme O: step 1/1. Its function is as follows. Catalyzes the conversion of heme O to heme A by two successive hydroxylations of the methyl group at C8. The first hydroxylation forms heme I, the second hydroxylation results in an unstable dihydroxymethyl group, which spontaneously dehydrates, resulting in the formyl group of heme A. This Caulobacter sp. (strain K31) protein is Heme A synthase.